Here is a 1372-residue protein sequence, read N- to C-terminus: Disease resistance protein RRS1B (1372 aa).

A TIR domain is found at Thr-2–Leu-137. The NB-ARC domain occupies Val-166–Ile-417. Gly-170–Thr-177 lines the ATP pocket. The LRR 1 repeat unit spans residues Pro-491–Asn-515. The stretch at Asn-528–Ser-544 is one LRR 2; degenerate repeat. LRR repeat units follow at residues Leu-545 to Pro-568, His-570 to Leu-591, Ala-614 to Leu-637, Leu-638 to Pro-658, Pro-659 to Pro-681, Ile-693 to Thr-718, Pro-723 to Glu-747, Leu-749 to Pro-767, Arg-768 to Phe-792, and Cys-798 to Leu-823. The Nuclear localization signal signature appears at Ile-950 to Asp-964. The segment at residues Asp-1174 to Pro-1240 is a DNA-binding region (WRKY). Disordered stretches follow at residues Leu-1246–Pro-1288 and Gln-1337–Arg-1372. The span at Ser-1249–Ser-1269 shows a compositional bias: low complexity. Positions Gln-1270–His-1279 are enriched in basic and acidic residues. The span at Gln-1337 to Gly-1348 shows a compositional bias: polar residues.

It belongs to the disease resistance TIR-NB-LRR family. In terms of assembly, interacts with RPS4B. RPS4B-RRS1B heterodimer interacts with the bacterial effectors AvrRps4 and PopP2.

The protein resides in the nucleus. In terms of biological role, transcription factor. Interacts specifically with the W box (5'-(T)TGAC[CT]-3'), a frequently occurring elicitor-responsive cis-acting element. Also acts as a disease resistance protein that specifically recognizes the AvrRps4 type III effector avirulence protein from P.syringae. Heterodimerization with RPS4B is required to form a functional complex to recognize AvrRps4 and to mediate the hypersensitive response. This chain is Disease resistance protein RRS1B, found in Arabidopsis thaliana (Mouse-ear cress).